The primary structure comprises 108 residues: Putative pterin-4-alpha-carbinolamine dehydratase (108 aa).

The protein belongs to the pterin-4-alpha-carbinolamine dehydratase family.

It catalyses the reaction (4aS,6R)-4a-hydroxy-L-erythro-5,6,7,8-tetrahydrobiopterin = (6R)-L-erythro-6,7-dihydrobiopterin + H2O. The chain is Putative pterin-4-alpha-carbinolamine dehydratase from Chromobacterium violaceum (strain ATCC 12472 / DSM 30191 / JCM 1249 / CCUG 213 / NBRC 12614 / NCIMB 9131 / NCTC 9757 / MK).